Consider the following 1053-residue polypeptide: MLDVNNFEYMKIGLASPDKIRSWSHGEVKKPETINYRTLKPERDGLFCERIFGPMKDWECSCGKYKRVRYKGVVCDRCGVEVTKSKVRRERMGHIELAAPVSHIWYFKGIPSRMGLVMDMSPRALEEIIYFASYVVTEPGDTPLEKKQLLSEKEYRVYREKYGKNFHAGMGAEAIKKILSDIDLEKETQELKAELQTAQGQRRTRAIRRLEVMEAFRNSGNEPSWMILDVLPVIPPEIRPMVQLEGGRFATSDLNDLYRRVINRNNRLKRLLDLGAPNIIVQNEKRMLQEAVDALIDNGRRGRPVTGPGNRPLKSLSHMLKGKQGRFRQNLLGKRVDYSGRSVIVVGPNLKMYQCGLPKEMALELFKPFIMKELVSRGLAHNIKSAKRKIERMAAEVWDVLEEVIREHPVLLNRAPTLHRLGIQAFEPTLVEGRAIRLHPLVCTAYNADFDGDQMAVHVPLSAEAQAEARLLMLAAQNILNPKDGKPVVTPSQDMVLGNYYLTLERENAVGEGLVFKDINEAMIAYTNGYVHLHSRIGVYAGSIQNERFTEEQRKQLLITTVGKLVFNTILPESFPYINEPTKYNLEIETPTKYFVDTTTDVKTHIANQPLIDPFKKGILGNIIAEVFKKFHITETSKMLDRMKDLGFKISTKAGITVGIADILTLQEKPEILEKAHDKVEKITKQFRRGLITGDERYERVIGVWNAAKDEIQNKLILSLERLNPIFMMQDSGARGNISNFTQLAGMRGLMADPSGRIVELPITSNFREGLTVLEYFISTHGARKGLTDTALKTADSGYLTRRLVDVAQDVIIREDDCGTDRGLTIKAIREGTEIIEPLEERLEGRYARKTIRHPETNEIIVKENDLITEDIAVQIIGAGIEEVSIRSAFTCNTKHGVCKKCYGKNLATGTEVEVGEAVGIIAAQSIGEPGTQLTMRTFHTGGVAGDDITQGLPRIQEIFEARNPKGQATITEVAGEVVSIEEGRDRGLEITIQGVDDRRSYTVPYTARLRVEVGSMLDRGEALTEGSIDPKALIRVRDVLSVQEYLLAEVQK.

Cysteine 60, cysteine 62, cysteine 75, and cysteine 78 together coordinate Zn(2+). Residues aspartate 449, aspartate 451, and aspartate 453 each contribute to the Mg(2+) site. Positions 818, 892, 899, and 902 each coordinate Zn(2+).

The protein belongs to the RNA polymerase beta' chain family. In terms of assembly, the RNAP catalytic core consists of 2 alpha, 1 beta, 1 beta' and 1 omega subunit. When a sigma factor is associated with the core the holoenzyme is formed, which can initiate transcription. It depends on Mg(2+) as a cofactor. The cofactor is Zn(2+).

It carries out the reaction RNA(n) + a ribonucleoside 5'-triphosphate = RNA(n+1) + diphosphate. Its function is as follows. DNA-dependent RNA polymerase catalyzes the transcription of DNA into RNA using the four ribonucleoside triphosphates as substrates. This chain is DNA-directed RNA polymerase subunit beta', found in Listeria grayi (Listeria murrayi).